The primary structure comprises 206 residues: Large ribosomal subunit protein uL3 (206 aa).

The segment at 127-151 (SGGPSSHGSKFHRHLGGTGQATTPA) is disordered.

It belongs to the universal ribosomal protein uL3 family. Part of the 50S ribosomal subunit. Forms a cluster with proteins L14 and L19.

In terms of biological role, one of the primary rRNA binding proteins, it binds directly near the 3'-end of the 23S rRNA, where it nucleates assembly of the 50S subunit. This is Large ribosomal subunit protein uL3 from Borreliella burgdorferi (strain ZS7) (Borrelia burgdorferi).